A 331-amino-acid polypeptide reads, in one-letter code: Septin homolog spn2 (331 aa).

The Septin-type G domain maps to 29–301; it reads RGFQFNVMVV…EKFRFKQLSS (273 aa). The interval 39–46 is G1 motif; sequence GPSGSGKS. Residues 39 to 46, T73, G99, 179 to 187, G235, and R250 contribute to the GTP site; these read GPSGSGKS and KSDSLTLEE. Residues 96–99 form a G3 motif region; the sequence is DTPG. A G4 motif region spans residues 178–181; it reads AKSD. Residues 311-331 form a disordered region; the sequence is RMGSPAPVYPSEPHLHTATAQ.

This sequence belongs to the TRAFAC class TrmE-Era-EngA-EngB-Septin-like GTPase superfamily. Septin GTPase family. As to quaternary structure, component of the septin complex composed of two copies of each spn1, spn2, spn3 and spn4. Component of the sporulation-specific septin complex composed of at least spn2, spn5, spn6 and spn7.

Its subcellular location is the cytoplasm. The protein resides in the cell cortex. It localises to the forespore membrane. In terms of biological role, plays a role in the cell cycle. Involved in a late stage of septum formation leading to the separation of the daughter cells. Involved in the correct orientation of forespore membrane extension during sporulation. Binds phosphatidylinositol 4-phosphate. This chain is Septin homolog spn2 (spn2), found in Schizosaccharomyces pombe (strain 972 / ATCC 24843) (Fission yeast).